The primary structure comprises 219 residues: MSMGLEITGTSLAVLGWLCTIVCCALPMWRVSAFIGSSIITAQITWEGLWMNCVVQSTGQMQCKMYDSLLALPQDLQAARALIVVSILLAAFGLLVALVGAQCTNCVQDETAKAKITIVAGVLFLLAAVLTLVPVSWSANTIIRDFYNPLVPEAQKREMGTGLYVGWAAAALQLLGGALLCCSCPPREKYAPTKILYSAPRSTGPGTGTGTAYDRKDYV.

Topologically, residues 1-8 (MSMGLEIT) are cytoplasmic. The helical transmembrane segment at 9-29 (GTSLAVLGWLCTIVCCALPMW) threads the bilayer. The Extracellular portion of the chain corresponds to 30-80 (RVSAFIGSSIITAQITWEGLWMNCVVQSTGQMQCKMYDSLLALPQDLQAAR). A helical transmembrane segment spans residues 81–101 (ALIVVSILLAAFGLLVALVGA). Over 102–115 (QCTNCVQDETAKAK) the chain is Cytoplasmic. The chain crosses the membrane as a helical span at residues 116 to 136 (ITIVAGVLFLLAAVLTLVPVS). Residues 137-161 (WSANTIIRDFYNPLVPEAQKREMGT) are Extracellular-facing. A helical transmembrane segment spans residues 162 to 182 (GLYVGWAAAALQLLGGALLCC). Residues 183–219 (SCPPREKYAPTKILYSAPRSTGPGTGTGTAYDRKDYV) are Cytoplasmic-facing. Position 197 is a phosphotyrosine (Y197). The residue at position 198 (S198) is a Phosphoserine. An interactions with TJP1, TJP2 and TJP3 region spans residues 218 to 219 (YV).

This sequence belongs to the claudin family. Can form homo- and heteropolymers with other CLDN. Homopolymers interact with CLDN1 and CLDN2 homopolymers. Interacts in cis (within the same plasma membrane) with CLDN19. Directly interacts with TJP1/ZO-1, TJP2/ZO-2 and TJP3/ZO-3.

It localises to the cell junction. It is found in the tight junction. The protein localises to the cell membrane. In terms of biological role, plays a major role in tight junction-specific obliteration of the intercellular space, through calcium-independent cell-adhesion activity. The chain is Claudin-3 (Cldn3) from Rattus norvegicus (Rat).